The following is a 2633-amino-acid chain: Non-reducing polyketide synthase sor2 (2633 aa).

Positions 67–237 (VSNAQKLAEW…TTSTRTVAAL (171 aa)) are N-terminal acylcarrier protein transacylase domain (SAT). The active-site Nucleophile; for transacylase activity is Cys-140. Catalysis depends on His-258, which acts as the Proton donor/acceptor; for transacylase activity. The Ketosynthase family 3 (KS3) domain occupies 389–814 (ENDIAVIGMA…GSNASVIIKQ (426 aa)). Active-site for beta-ketoacyl synthase activity residues include Cys-561, His-696, and His-737. The malonyl-CoA:ACP transacylase (MAT) domain stretch occupies residues 928–1239 (CFGGQVSTFV…SKASSQLSDV (312 aa)). An N-terminal hotdog fold region spans residues 1307-1437 (PQPVGLYTLL…GQLHFQASDD (131 aa)). Positions 1307-1627 (PQPVGLYTLL…YAPVSLDQLF (321 aa)) constitute a PKS/mFAS DH domain. Residues 1338 to 1509 (MSDHAIGKAQ…SNESAGRLVR (172 aa)) are product template (PT) domain. Positions 1464–1627 (GRSDEVIQGQ…YAPVSLDQLF (164 aa)) are C-terminal hotdog fold. A Carrier domain is found at 1684–1758 (EELWLRLRPV…GILKFLQSTL (75 aa)). Ser-1718 is modified (O-(pantetheine 4'-phosphoryl)serine). The interval 1762-1792 (DVHDSSETMSTVSSDGNVHSPPTSGSEMASP) is disordered. Polar residues predominate over residues 1768–1790 (ETMSTVSSDGNVHSPPTSGSEMA). The segment at 1982 to 2166 (FELMADFLTR…ASGFKHVRWT (185 aa)) is methyltransferase domain. Residues 2253–2495 (VTGATGSLGS…TLRALPDVDG (243 aa)) are NADPH-binding (R) domain.

The cofactor is pantetheine 4'-phosphate.

It functions in the pathway secondary metabolite biosynthesis. Its function is as follows. Non-reducing polyketide synthase; part of the SOR gene cluster that mediates the biosynthesis of sorbicillinoids, a diverse group of yellow secondary metabolites that restrict growth of competing pathogenic fungi but not of bacteria. Sorbicillinoids biosynthesis requires the action of two PKSs. The SOR cluster is required for the production of trichodimerol and dihydrotrichotetronin, with sor2 being sufficient for production of trichodimerol, but not dihydrotrichotetronin in the light. Sor1 iteratively combines three acetyl units and the growing chain is modified by the ketoacyl reductase subunit, and optional by the enoyl reductase subunit in the second cycle. The polyketide is then handed over to the PKS sor2, which adds three more acetyl units, and two methyl groups. Sor2 releases an aldehyde, which undergoes spontaneous cyclization resulting in the formation of sorbicillin or 2',3'-dihydrosorbicillin. The monooxygenase sor5 oxidizes sorbicillin and 2',3'-dihydrosorbicillin to 2',3'-dihydrosorbicillinol and sorbicillinol, respectively. The oxidoreductase sor8 further converts sorbicillinol into oxosorbicillinol. Sorbicillinol is the building block for the other sorbicillinoids such as disorbicillinol, bisvertinolon, dihydrobisvertinolone, and dihydrotrichotetronine. In Hypocrea jecorina (strain QM6a) (Trichoderma reesei), this protein is Non-reducing polyketide synthase sor2.